We begin with the raw amino-acid sequence, 739 residues long: TonB-dependent heme receptor A (739 aa).

An N-terminal signal peptide occupies residues 1–22; the sequence is MKMKKQCATLTFFIGLHGYTIA. Residues 38 to 150 form the TBDR plug domain; the sequence is GHHERQPDRS…FAGTIKLETK (113 aa). The region spanning 161–739 is the TBDR beta-barrel domain; it reads LLGGLLKYGY…NIKLSISKQF (579 aa).

This sequence belongs to the TonB-dependent receptor family.

The protein resides in the cell outer membrane. Its function is as follows. Heme receptor. The chain is TonB-dependent heme receptor A (tdhA) from Haemophilus ducreyi (strain 35000HP / ATCC 700724).